The chain runs to 170 residues: NADH-quinone oxidoreductase subunit B (170 aa).

Residues C37, C38, C102, and C131 each coordinate [4Fe-4S] cluster.

It belongs to the complex I 20 kDa subunit family. As to quaternary structure, NDH-1 is composed of 14 different subunits. Subunits NuoB, C, D, E, F, and G constitute the peripheral sector of the complex. Requires [4Fe-4S] cluster as cofactor.

The protein resides in the cell inner membrane. It carries out the reaction a quinone + NADH + 5 H(+)(in) = a quinol + NAD(+) + 4 H(+)(out). Functionally, NDH-1 shuttles electrons from NADH, via FMN and iron-sulfur (Fe-S) centers, to quinones in the respiratory chain. The immediate electron acceptor for the enzyme in this species is believed to be ubiquinone. Couples the redox reaction to proton translocation (for every two electrons transferred, four hydrogen ions are translocated across the cytoplasmic membrane), and thus conserves the redox energy in a proton gradient. In Geobacter sp. (strain M21), this protein is NADH-quinone oxidoreductase subunit B.